The sequence spans 341 residues: Glucokinase (341 aa).

18–23 (GDIGGT) lines the ATP pocket.

The protein belongs to the bacterial glucokinase family.

The protein resides in the cytoplasm. The catalysed reaction is D-glucose + ATP = D-glucose 6-phosphate + ADP + H(+). The sequence is that of Glucokinase from Rhizobium johnstonii (strain DSM 114642 / LMG 32736 / 3841) (Rhizobium leguminosarum bv. viciae).